The primary structure comprises 567 residues: MVARRNKPKAPLVKHRFSGGDSHKPKPPPATKQPFSGVESHKPKTSPATKQKFSGVESHKPKTPPGKQRFSGAESRKPKTPPATKQKFSSLERSALYARREAANILRTVLRGDAERRAVASIKSLVLSPSVRNKRGTFALVCETLKYLTVIKDVLDIANVLNSKWKRQEPLVFIVCYDILFGKDTPSIGDAEKFLMRHKEALLSGLATLLVRKKVDSVDQLLGSKLTGHLKPRYVRVNTLKMDVDSAVQELEKHYTVQKDETVPDLLVLPPGSDLHAHRLVANGRIFLQGKASSMVAAALQPQAGWEVLDACSAPGNKTIHLAALMEGQGKIIACELNEERVKRLEHTIKLSGASNIEVCHGDFLGLNPKDPSFAKIRAILLDPSCSGSGTITDRLDHLLPSHSEDNNMNYDSMRLHKLAVFQKKALAHALSFPKVERVVYSTCSIYQIENEDVVSSVLPLASSLGFKLATPFPQWQRRGLPVFAGSEHLLRMDPVEDKEGFFIALFVRANKLDNPKSSELPDRVCRRRPKERTMQLHPYLCPKMFRAWSGTLHRLKTRFLLSRNGC.

Basic residues predominate over residues 1–17 (MVARRNKPKAPLVKHRF). Residues 1 to 88 (MVARRNKPKA…KTPPATKQKF (88 aa)) form a disordered region. Residues 312–318 (CSAPGNK), glutamate 336, aspartate 363, and aspartate 383 each bind S-adenosyl-L-methionine. Cysteine 444 functions as the Nucleophile in the catalytic mechanism.

It belongs to the class I-like SAM-binding methyltransferase superfamily. RsmB/NOP family.

The enzyme catalyses a cytidine in 25S rRNA + S-adenosyl-L-methionine = a 5-methylcytidine in 25S rRNA + S-adenosyl-L-homocysteine + H(+). S-adenosyl-L-methionine-dependent methyltransferase that specifically methylates the C(5) position of cytosine 2268 (m5C2268) in 25S rRNA. In Arabidopsis thaliana (Mouse-ear cress), this protein is 25S rRNA (cytosine-C(5))-methyltransferase NSUN5.